A 230-amino-acid polypeptide reads, in one-letter code: Ion-translocating oxidoreductase complex subunit E (230 aa).

5 consecutive transmembrane segments (helical) span residues 39-59 (LGLG…VSLI), 69-89 (IPVF…LMNA), 93-113 (GLYL…IIIG), 125-145 (LPAA…LVVL), and 182-202 (SFLL…LIAL).

This sequence belongs to the NqrDE/RnfAE family. In terms of assembly, the complex is composed of six subunits: RnfA, RnfB, RnfC, RnfD, RnfE and RnfG.

Its subcellular location is the cell inner membrane. Its function is as follows. Part of a membrane-bound complex that couples electron transfer with translocation of ions across the membrane. The protein is Ion-translocating oxidoreductase complex subunit E of Vibrio vulnificus (strain YJ016).